A 271-amino-acid polypeptide reads, in one-letter code: Putative phosphoenolpyruvate synthase regulatory protein (271 aa).

ADP is bound at residue 152 to 159; the sequence is GVSRCGKT.

Belongs to the pyruvate, phosphate/water dikinase regulatory protein family. PSRP subfamily.

It carries out the reaction [pyruvate, water dikinase] + ADP = [pyruvate, water dikinase]-phosphate + AMP + H(+). The catalysed reaction is [pyruvate, water dikinase]-phosphate + phosphate + H(+) = [pyruvate, water dikinase] + diphosphate. Bifunctional serine/threonine kinase and phosphorylase involved in the regulation of the phosphoenolpyruvate synthase (PEPS) by catalyzing its phosphorylation/dephosphorylation. This is Putative phosphoenolpyruvate synthase regulatory protein from Legionella pneumophila (strain Paris).